A 236-amino-acid polypeptide reads, in one-letter code: Ribose-5-phosphate isomerase A (236 aa).

Substrate contacts are provided by residues T28–T31, D83–D86, and K96–G99. E105 serves as the catalytic Proton acceptor. K123 serves as a coordination point for substrate.

This sequence belongs to the ribose 5-phosphate isomerase family. Homodimer.

The catalysed reaction is aldehydo-D-ribose 5-phosphate = D-ribulose 5-phosphate. It participates in carbohydrate degradation; pentose phosphate pathway; D-ribose 5-phosphate from D-ribulose 5-phosphate (non-oxidative stage): step 1/1. Functionally, catalyzes the reversible conversion of ribose-5-phosphate to ribulose 5-phosphate. This is Ribose-5-phosphate isomerase A from Afipia carboxidovorans (strain ATCC 49405 / DSM 1227 / KCTC 32145 / OM5) (Oligotropha carboxidovorans).